Here is a 34-residue protein sequence, read N- to C-terminus: Antimicrobial peptide Alo-1 (34 aa).

3 disulfide bridges follow: Cys1-Cys18, Cys8-Cys22, and Cys17-Cys33.

The protein localises to the secreted. Functionally, has antifungal activity against C.glabrata. The chain is Antimicrobial peptide Alo-1 from Acrocinus longimanus (Giant harlequin beetle).